The sequence spans 137 residues: Interferon-induced transmembrane protein 3 (137 aa).

Over 1–57 (MNHTSQAFVNAATGGQPPNYERIKEEYEVSELGAPHGSASVRTTVINMPREVSVPDH) the chain is Cytoplasmic. Tyr-20 carries the post-translational modification Phosphotyrosine. Residue Lys-24 forms a Glycyl lysine isopeptide (Lys-Gly) (interchain with G-Cter in ubiquitin) linkage. Tyr-27 carries the post-translational modification Phosphotyrosine. The segment at residues 58–78 (VVWSLFNTLFMNFCCLGFIAY) is an intramembrane region (helical). The tract at residues 60-93 (WSLFNTLFMNFCCLGFIAYAYSVKSRDRKMVGDM) is interaction with SPP1. 2 S-palmitoyl cysteine lipidation sites follow: Cys-71 and Cys-72. Over 79–109 (AYSVKSRDRKMVGDMTGAQAYASTAKCLNIS) the chain is Cytoplasmic. Residues Lys-83, Lys-88, and Lys-104 each participate in a glycyl lysine isopeptide (Lys-Gly) (interchain with G-Cter in ubiquitin) cross-link. A lipid anchor (S-palmitoyl cysteine) is attached at Cys-105. The tract at residues 108-133 (ISSLVLSILMVIITIVTVVIIALNAP) is interaction with VAPA. The chain crosses the membrane as a helical span at residues 110–130 (SLVLSILMVIITIVTVVIIAL). Residues 131–137 (NAPRLQT) are Extracellular-facing.

It belongs to the CD225/Dispanin family. Interacts with ATP6V0B. Interacts with CD81. Interacts with SPP1; the interaction reduces OPN expression. Interacts with BRI3. Polyubiquitinated with both 'Lys-48' and 'Lys-63' linkages. Ubiquitination negatively regulates antiviral activity. Lys-24 is the most prevalent ubiquitination site. In terms of processing, phosphorylation at Tyr-20 is required for endosomal and lysosomal location.

It is found in the cell membrane. The protein localises to the late endosome membrane. It localises to the early endosome membrane. Its subcellular location is the lysosome membrane. The protein resides in the cytoplasm. It is found in the perinuclear region. Its function is as follows. IFN-induced antiviral protein which disrupts intracellular cholesterol homeostasis. Inhibits the entry of viruses to the host cell cytoplasm by preventing viral fusion with cholesterol depleted endosomes. May inactivate new enveloped viruses which buds out of the infected cell, by letting them go out with a cholesterol depleted membrane. Active against multiple viruses. Plays a critical role in the structural stability and function of vacuolar ATPase (v-ATPase). Establishes physical contact with the v-ATPase of endosomes which is critical for proper clathrin localization and is also required for the function of the v-ATPase to lower the pH in phagocytic endosomes thus establishing an antiviral state. This Rattus norvegicus (Rat) protein is Interferon-induced transmembrane protein 3.